The chain runs to 135 residues: Large ribosomal subunit protein bL17 (135 aa).

This sequence belongs to the bacterial ribosomal protein bL17 family. As to quaternary structure, part of the 50S ribosomal subunit. Contacts protein L32.

The protein is Large ribosomal subunit protein bL17 of Rhodopseudomonas palustris (strain BisB18).